Reading from the N-terminus, the 317-residue chain is MATTTQTTTNSLPSGAGGPQQLVTQMLNHTAPHYTFSFTPFLQRTYQHSLPADRPICKAYASGNCPLKSHCPERHVTASSQNTHGGGNTFSGGFGSLVCKHWLRGLCKKGESCEFLHEYNLRKMPECNFFVRNGYCSNGDECLYLHIDPLSRLPPCPHYERGFCPLGPRCDKKHFRRKLCLYYLAGFCPDGKGCKEGAHPRWTADKDMEKPRAKGEGDQMLLQQQQQQQQQQHMGDANGMGGGMAQATGANEYMDRERERDRDNREREMMMQGRDRDGGGHDRHKDRFGGGGGGGGGGRGRGGWRGRGRGGFRGKGH.

Positions 1 to 20 (MATTTQTTTNSLPSGAGGPQ) are disordered. 5 C3H1-type zinc fingers span residues 51-78 (PADR…HVTA), 93-120 (GFGS…HEYN), 121-149 (LRKM…HIDP), 150-177 (LSRL…HFRR), and 179-202 (LCLY…HPRW). Residues 202 to 217 (WTADKDMEKPRAKGEG) are compositionally biased toward basic and acidic residues. Residues 202-317 (WTADKDMEKP…GRGGFRGKGH (116 aa)) form a disordered region. Low complexity predominate over residues 223 to 237 (QQQQQQQQQQHMGDA). Positions 253–288 (YMDRERERDRDNREREMMMQGRDRDGGGHDRHKDRF) are enriched in basic and acidic residues. Over residues 289–301 (GGGGGGGGGGRGR) the composition is skewed to gly residues. Positions 302–317 (GGWRGRGRGGFRGKGH) are enriched in basic residues.

It belongs to the CPSF4/YTH1 family.

Its subcellular location is the nucleus. In terms of biological role, component of the cleavage factor I (CF I) involved in pre-mRNA 3'-end processing. This is mRNA 3'-end-processing protein yth-1 (yth-1) from Neurospora crassa (strain ATCC 24698 / 74-OR23-1A / CBS 708.71 / DSM 1257 / FGSC 987).